The following is a 407-amino-acid chain: Peptidase T (407 aa).

H82 lines the Zn(2+) pocket. The active site involves D84. D143 contributes to the Zn(2+) binding site. Catalysis depends on E177, which acts as the Proton acceptor. Zn(2+) is bound by residues E178, D200, and H382.

Belongs to the peptidase M20B family. Requires Zn(2+) as cofactor.

It localises to the cytoplasm. The enzyme catalyses Release of the N-terminal residue from a tripeptide.. Functionally, cleaves the N-terminal amino acid of tripeptides. In Streptococcus pyogenes serotype M12 (strain MGAS2096), this protein is Peptidase T.